The chain runs to 329 residues: Porphobilinogen deaminase (329 aa).

Cys250 is modified (S-(dipyrrolylmethanemethyl)cysteine).

This sequence belongs to the HMBS family. In terms of assembly, monomer. Requires dipyrromethane as cofactor.

It catalyses the reaction 4 porphobilinogen + H2O = hydroxymethylbilane + 4 NH4(+). The protein operates within porphyrin-containing compound metabolism; protoporphyrin-IX biosynthesis; coproporphyrinogen-III from 5-aminolevulinate: step 2/4. Functionally, tetrapolymerization of the monopyrrole PBG into the hydroxymethylbilane pre-uroporphyrinogen in several discrete steps. This Burkholderia thailandensis (strain ATCC 700388 / DSM 13276 / CCUG 48851 / CIP 106301 / E264) protein is Porphobilinogen deaminase.